The following is a 178-amino-acid chain: Ribonuclease M5 (178 aa).

In terms of domain architecture, Toprim spans 4–100 (NEFIVVEGRD…KIGVEHADLI (97 aa)). Mg(2+) is bound by residues E10, D56, and D58.

The protein belongs to the ribonuclease M5 family. The cofactor is Mg(2+).

It is found in the cytoplasm. It catalyses the reaction Endonucleolytic cleavage of RNA, removing 21 and 42 nucleotides, respectively, from the 5'- and 3'-termini of a 5S-rRNA precursor.. In terms of biological role, required for correct processing of both the 5' and 3' ends of 5S rRNA precursor. Cleaves both sides of a double-stranded region yielding mature 5S rRNA in one step. The protein is Ribonuclease M5 of Staphylococcus aureus (strain NCTC 8325 / PS 47).